Reading from the N-terminus, the 851-residue chain is UPF0182 protein CYA_1810 (851 aa).

A run of 7 helical transmembrane segments spans residues 7–27 (GLVLLLWAGLGILAITALASF), 47–67 (VLARWGLGLGAFAFALAVVGS), 76–96 (ASTAGAWAIALGLSGGLAWSL), 141–161 (FNLVLLTLITVALIYLVELGL), 168–188 (LALSLFAQRHLLILGGALFLL), 220–240 (LPATTLMSGVAFLTAVGFWAL), and 259–279 (WASSLLAPALLWGAYLGFGLL).

This sequence belongs to the UPF0182 family.

It localises to the cell membrane. The chain is UPF0182 protein CYA_1810 from Synechococcus sp. (strain JA-3-3Ab) (Cyanobacteria bacterium Yellowstone A-Prime).